Here is a 61-residue protein sequence, read N- to C-terminus: Small ribosomal subunit protein uS14B (61 aa).

Positions 24, 27, 40, and 43 each coordinate Zn(2+).

It belongs to the universal ribosomal protein uS14 family. Zinc-binding uS14 subfamily. Part of the 30S ribosomal subunit. Contacts proteins S3 and S10. Zn(2+) is required as a cofactor.

Functionally, binds 16S rRNA, required for the assembly of 30S particles and may also be responsible for determining the conformation of the 16S rRNA at the A site. In Ligilactobacillus salivarius (strain UCC118) (Lactobacillus salivarius), this protein is Small ribosomal subunit protein uS14B.